The sequence spans 431 residues: Mitochondrial distribution and morphology protein 12 (431 aa).

The SMP-LTD domain occupies 1 to 431; the sequence is MSIDLNWETL…VYPSFWTFLV (431 aa). Disordered regions lie at residues 68–153 and 209–289; these read DFYE…GVST and QSHT…PKPE. Residues 69–96 show a composition bias toward acidic residues; it reads FYEDLDDDDGGSDEDDEGSNSCQTDEEN. Basic and acidic residues predominate over residues 97–113; that stretch reads EAAKTLRERRKMDRVER. Over residues 115-129 the composition is skewed to polar residues; it reads ANGSSNVSNPPSYTD. Residues 241-252 show a composition bias toward low complexity; sequence SASTLAVSSSTT.

It belongs to the MDM12 family. As to quaternary structure, component of the ER-mitochondria encounter structure (ERMES) or MDM complex, composed of mmm1, mdm10, mdm12 and mdm34. A mmm1 homodimer associates with one molecule of mdm12 on each side in a pairwise head-to-tail manner, and the SMP-LTD domains of mmm1 and mdm12 generate a continuous hydrophobic tunnel for phospholipid trafficking.

It localises to the mitochondrion outer membrane. The protein localises to the endoplasmic reticulum membrane. In terms of biological role, component of the ERMES/MDM complex, which serves as a molecular tether to connect the endoplasmic reticulum (ER) and mitochondria. Components of this complex are involved in the control of mitochondrial shape and protein biogenesis, and function in nonvesicular lipid trafficking between the ER and mitochondria. Mdm12 is required for the interaction of the ER-resident membrane protein mmm1 and the outer mitochondrial membrane-resident beta-barrel protein mdm10. The mdm12-mmm1 subcomplex functions in the major beta-barrel assembly pathway that is responsible for biogenesis of all mitochondrial outer membrane beta-barrel proteins, and acts in a late step after the SAM complex. The mdm10-mdm12-mmm1 subcomplex further acts in the TOM40-specific pathway after the action of the mdm12-mmm1 complex. Essential for establishing and maintaining the structure of mitochondria and maintenance of mtDNA nucleoids. The sequence is that of Mitochondrial distribution and morphology protein 12 from Sclerotinia sclerotiorum (strain ATCC 18683 / 1980 / Ss-1) (White mold).